A 107-amino-acid polypeptide reads, in one-letter code: Nucleoid-associated protein RC1337 (107 aa).

The protein belongs to the YbaB/EbfC family. As to quaternary structure, homodimer.

The protein resides in the cytoplasm. Its subcellular location is the nucleoid. Functionally, binds to DNA and alters its conformation. May be involved in regulation of gene expression, nucleoid organization and DNA protection. The polypeptide is Nucleoid-associated protein RC1337 (Rickettsia conorii (strain ATCC VR-613 / Malish 7)).